Here is a 424-residue protein sequence, read N- to C-terminus: Serine--tRNA ligase (424 aa).

Residue 233-235 coordinates L-serine; the sequence is TAE. ATP is bound by residues 264–266 and Val-280; that span reads RRE. Glu-287 provides a ligand contact to L-serine. 351–354 contributes to the ATP binding site; the sequence is EISS. Residue Ser-386 participates in L-serine binding.

It belongs to the class-II aminoacyl-tRNA synthetase family. Type-1 seryl-tRNA synthetase subfamily. As to quaternary structure, homodimer. The tRNA molecule binds across the dimer.

The protein localises to the cytoplasm. The catalysed reaction is tRNA(Ser) + L-serine + ATP = L-seryl-tRNA(Ser) + AMP + diphosphate + H(+). It carries out the reaction tRNA(Sec) + L-serine + ATP = L-seryl-tRNA(Sec) + AMP + diphosphate + H(+). It functions in the pathway aminoacyl-tRNA biosynthesis; selenocysteinyl-tRNA(Sec) biosynthesis; L-seryl-tRNA(Sec) from L-serine and tRNA(Sec): step 1/1. Functionally, catalyzes the attachment of serine to tRNA(Ser). Is also able to aminoacylate tRNA(Sec) with serine, to form the misacylated tRNA L-seryl-tRNA(Sec), which will be further converted into selenocysteinyl-tRNA(Sec). The chain is Serine--tRNA ligase from Kosmotoga olearia (strain ATCC BAA-1733 / DSM 21960 / TBF 19.5.1).